Reading from the N-terminus, the 206-residue chain is FMN-dependent NADH:quinone oxidoreductase (206 aa).

Residues Ser9, 15–17, and 139–142 each bind FMN; these read SVS and SRGG.

It belongs to the azoreductase type 1 family. Homodimer. FMN serves as cofactor.

The catalysed reaction is 2 a quinone + NADH + H(+) = 2 a 1,4-benzosemiquinone + NAD(+). The enzyme catalyses N,N-dimethyl-1,4-phenylenediamine + anthranilate + 2 NAD(+) = 2-(4-dimethylaminophenyl)diazenylbenzoate + 2 NADH + 2 H(+). In terms of biological role, quinone reductase that provides resistance to thiol-specific stress caused by electrophilic quinones. Functionally, also exhibits azoreductase activity. Catalyzes the reductive cleavage of the azo bond in aromatic azo compounds to the corresponding amines. The polypeptide is FMN-dependent NADH:quinone oxidoreductase (Cupriavidus necator (strain ATCC 17699 / DSM 428 / KCTC 22496 / NCIMB 10442 / H16 / Stanier 337) (Ralstonia eutropha)).